A 188-amino-acid chain; its full sequence is Peptide deformylase (188 aa).

Residues C109 and H152 each coordinate Fe cation. The active site involves E153. Residue H156 coordinates Fe cation.

It belongs to the polypeptide deformylase family. The cofactor is Fe(2+).

The enzyme catalyses N-terminal N-formyl-L-methionyl-[peptide] + H2O = N-terminal L-methionyl-[peptide] + formate. Removes the formyl group from the N-terminal Met of newly synthesized proteins. Requires at least a dipeptide for an efficient rate of reaction. N-terminal L-methionine is a prerequisite for activity but the enzyme has broad specificity at other positions. The chain is Peptide deformylase from Chloroflexus aurantiacus (strain ATCC 29366 / DSM 635 / J-10-fl).